The primary structure comprises 211 residues: Endonuclease III (211 aa).

The HhH domain occupies R108–N127. Residues C187, C194, C197, and C203 each contribute to the [4Fe-4S] cluster site.

This sequence belongs to the Nth/MutY family. [4Fe-4S] cluster is required as a cofactor.

It catalyses the reaction 2'-deoxyribonucleotide-(2'-deoxyribose 5'-phosphate)-2'-deoxyribonucleotide-DNA = a 3'-end 2'-deoxyribonucleotide-(2,3-dehydro-2,3-deoxyribose 5'-phosphate)-DNA + a 5'-end 5'-phospho-2'-deoxyribonucleoside-DNA + H(+). DNA repair enzyme that has both DNA N-glycosylase activity and AP-lyase activity. The DNA N-glycosylase activity releases various damaged pyrimidines from DNA by cleaving the N-glycosidic bond, leaving an AP (apurinic/apyrimidinic) site. The AP-lyase activity cleaves the phosphodiester bond 3' to the AP site by a beta-elimination, leaving a 3'-terminal unsaturated sugar and a product with a terminal 5'-phosphate. The polypeptide is Endonuclease III (Haemophilus influenzae (strain ATCC 51907 / DSM 11121 / KW20 / Rd)).